The chain runs to 301 residues: tRNA dimethylallyltransferase (301 aa).

10-17 (GATATGKT) is an ATP binding site. 12 to 17 (TATGKT) lines the substrate pocket. The interval 35-38 (DSRQ) is interaction with substrate tRNA.

The protein belongs to the IPP transferase family. As to quaternary structure, monomer. The cofactor is Mg(2+).

The catalysed reaction is adenosine(37) in tRNA + dimethylallyl diphosphate = N(6)-dimethylallyladenosine(37) in tRNA + diphosphate. Its function is as follows. Catalyzes the transfer of a dimethylallyl group onto the adenine at position 37 in tRNAs that read codons beginning with uridine, leading to the formation of N6-(dimethylallyl)adenosine (i(6)A). The protein is tRNA dimethylallyltransferase of Crocosphaera subtropica (strain ATCC 51142 / BH68) (Cyanothece sp. (strain ATCC 51142)).